A 219-amino-acid chain; its full sequence is Lipid transferase CIDEB (219 aa).

The CIDE-N domain maps to 33–110 (PRQRPFRVCD…VLELGQSWSP (78 aa)).

It belongs to the CIDE family. Interacts with DFFA. Interacts with DFFB; inhibited by DFFB. Interacts with APOB. Interacts with PREB/SEC12; facilitating loading of SCAP-SREBP into COPII vesicles.

The protein resides in the lipid droplet. It localises to the endoplasmic reticulum membrane. Its subcellular location is the golgi apparatus. It is found in the cytoplasmic vesicle. The protein localises to the COPI-coated vesicle. Lipid transferase specifically expressed in hepatocytes, which promotes unilocular lipid droplet formation by mediating lipid droplet fusion. Lipid droplet fusion promotes their enlargement, restricting lipolysis and favoring lipid storage. Localizes on the lipid droplet surface, at focal contact sites between lipid droplets, and mediates atypical lipid droplet fusion by promoting directional net neutral lipid transfer from the smaller to larger lipid droplets. The transfer direction may be driven by the internal pressure difference between the contacting lipid droplet pair. Promotes lipid exchange and lipid droplet fusion in both small and large lipid droplet-containing hepatocytes. In addition to its role in lipid droplet fusion, also involved in cytoplasmic vesicle biogenesis and transport. Required for very-low-density lipoprotein (VLDL) lipidation and maturation. Probably involved in the biogenesis of VLDL transport vesicles by forming a COPII vesicle coat and facilitating the formation of endoplasmic reticulum-derived large vesicles. Also involved in sterol-regulated export of the SCAP-SREBP complex, composed of SCAP, SREBF1/SREBP1 and SREBF2/SREBP2, by promoting loading of SCAP-SREBP into COPII vesicles. May also activate apoptosis. The chain is Lipid transferase CIDEB (CIDEB) from Bos taurus (Bovine).